The following is a 367-amino-acid chain: Probable butyrate kinase (367 aa).

It belongs to the acetokinase family.

Its subcellular location is the cytoplasm. It carries out the reaction butanoate + ATP = butanoyl phosphate + ADP. The sequence is that of Probable butyrate kinase from Bacillus anthracis (strain A0248).